We begin with the raw amino-acid sequence, 58 residues long: Large ribosomal subunit protein bL32c (58 aa).

This sequence belongs to the bacterial ribosomal protein bL32 family.

Its subcellular location is the plastid. It localises to the chloroplast. This chain is Large ribosomal subunit protein bL32c (rpl32), found in Adiantum capillus-veneris (Maidenhair fern).